The primary structure comprises 551 residues: MFS efflux transporter aclA (551 aa).

8 helical membrane passes run 26–46, 64–84, 93–113, 125–145, 154–174, 181–201, 220–240, and 251–271; these read WAVF…ITAI, VWIA…IGQI, PMII…GATS, GLGA…LVPL, IALS…GALV, WVFY…VLCL, WVGN…LVIG, and VLVP…FEAS. A glycan (N-linked (GlcNAc...) asparagine) is linked at Asn286. 6 consecutive transmembrane segments (helical) span residues 294–314, 327–347, 356–376, 385–405, 420–440, and 492–512; these read VLAF…TLFF, VDVI…GAIM, LHWA…TWDA, ILQC…LPAI, AYAF…AVVF, and LRTV…LVVV.

The protein belongs to the major facilitator superfamily.

The protein localises to the membrane. MFS efflux transporter; part of the gene cluster that mediates the biosynthesis of aspirochlorine (or antibiotic A30641), an unusual halogenated spiro compound with distinctive antifungal properties due to selective inhibition of protein biosynthesis, and which is also active against bacteria, viruses, and murine tumor cells. The sequence is that of MFS efflux transporter aclA from Aspergillus oryzae (strain ATCC 42149 / RIB 40) (Yellow koji mold).